Here is a 184-residue protein sequence, read N- to C-terminus: ATP synthase subunit b, chloroplastic (184 aa).

Residues 27 to 49 (LATNPINLSVVLGVLIFFGKGVL) form a helical membrane-spanning segment.

It belongs to the ATPase B chain family. As to quaternary structure, F-type ATPases have 2 components, F(1) - the catalytic core - and F(0) - the membrane proton channel. F(1) has five subunits: alpha(3), beta(3), gamma(1), delta(1), epsilon(1). F(0) has four main subunits: a(1), b(1), b'(1) and c(10-14). The alpha and beta chains form an alternating ring which encloses part of the gamma chain. F(1) is attached to F(0) by a central stalk formed by the gamma and epsilon chains, while a peripheral stalk is formed by the delta, b and b' chains.

Its subcellular location is the plastid. The protein localises to the chloroplast thylakoid membrane. Functionally, f(1)F(0) ATP synthase produces ATP from ADP in the presence of a proton or sodium gradient. F-type ATPases consist of two structural domains, F(1) containing the extramembraneous catalytic core and F(0) containing the membrane proton channel, linked together by a central stalk and a peripheral stalk. During catalysis, ATP synthesis in the catalytic domain of F(1) is coupled via a rotary mechanism of the central stalk subunits to proton translocation. In terms of biological role, component of the F(0) channel, it forms part of the peripheral stalk, linking F(1) to F(0). The chain is ATP synthase subunit b, chloroplastic from Morus indica (Mulberry).